A 306-amino-acid polypeptide reads, in one-letter code: Mitochondrial brown fat uncoupling protein 1 (306 aa).

The Mitochondrial intermembrane portion of the chain corresponds to 1-10; it reads MVGTTATDVA. Residues 11 to 32 form a helical membrane-spanning segment; it reads PTMGVKIFSAGVAACLADVITF. Solcar repeat units lie at residues 11–102, 110–200, and 209–294; these read PTMG…VQEF, PSLR…MKGA, and DDVP…LKRE. The Mitochondrial matrix portion of the chain corresponds to 33-73; sequence PLDTAKVRLQIQGECQTTSGIRYKGVLGTITTLAKTEGPLK. Lysine 56 is a binding site for fatty acid 16:0. Residues 74–96 form a helical membrane-spanning segment; the sequence is LYSGLPAGLQRQISFASLRIGLY. The Mitochondrial intermembrane segment spans residues 97–115; that stretch reads DTVQEFWGGEEATPSLRSK. A helical transmembrane segment spans residues 116-132; sequence ICAGLTTGGVAVFIGQP. The Mitochondrial matrix segment spans residues 133 to 177; that stretch reads TEVVKVRLQAQSHLHGLKPRYTGTYNAYRIIATTESLSTLWKGTT. The helical transmembrane segment at 178-194 threads the bilayer; the sequence is PNLLRNIIINCTELVTY. The Mitochondrial intermembrane segment spans residues 195–211; it reads DLMKGALVRNDILADDV. A helical membrane pass occupies residues 212 to 231; that stretch reads PCHLLSALIAGFCTTLLSSP. At 232–265 the chain is on the mitochondrial matrix side; the sequence is VDVVKTRFINSPQGQYTSVPSCAMSMLTKEGPTA. Cysteine 253 is modified (cysteine sulfenic acid (-SOH)). A helical transmembrane segment spans residues 266–288; that stretch reads FFKGFAPSFLRLASWNVIMFVCF. Lysine 268 serves as a coordination point for fatty acid 16:0. The Mitochondrial intermembrane segment spans residues 289 to 306; it reads EKLKRELMKSRQTVDCAT.

The protein belongs to the mitochondrial carrier (TC 2.A.29) family. In terms of assembly, most probably functions as a monomer. Binds one purine nucleotide per monomer. However, has also been suggested to function as a homodimer or a homotetramer. Tightly associates with cardiolipin in the mitochondrion inner membrane; may stabilize and regulate its activity. In terms of processing, may undergo sulfenylation upon cold exposure. May increase the sensitivity of UCP1 thermogenic function to the activation by noradrenaline probably through structural effects. Post-translationally, may undergo ubiquitin-mediated proteasomal degradation.

Its subcellular location is the mitochondrion inner membrane. It catalyses the reaction H(+)(in) = H(+)(out). With respect to regulation, has no constitutive proton transporter activity and has to be activated by long-chain fatty acids/LCFAs. Inhibited by purine nucleotides. Both purine nucleotides and LCFAs bind the cytosolic side of the transporter and directly compete to activate or inhibit it. Activated by noradrenaline and reactive oxygen species. Despite lacking canonical translational encoding for selenocysteine, a small pool of the protein has been observed to selectively incorporate selenocysteine at 'Cys-253'. Selenocysteine-modified protein is highly sensitive to redox modification and may constitute a pool of protein highly sensitive to activation by elevated levels of reactive oxygen species (ROS). Functionally, mitochondrial protein responsible for thermogenic respiration, a specialized capacity of brown adipose tissue and beige fat that participates in non-shivering adaptive thermogenesis to temperature and diet variations and more generally to the regulation of energy balance. Functions as a long-chain fatty acid/LCFA and proton symporter, simultaneously transporting one LCFA and one proton through the inner mitochondrial membrane. However, LCFAs remaining associated with the transporter via their hydrophobic tails, it results in an apparent transport of protons activated by LCFAs. Thereby, dissipates the mitochondrial proton gradient and converts the energy of substrate oxydation into heat instead of ATP. Regulates the production of reactive oxygen species/ROS by mitochondria. The sequence is that of Mitochondrial brown fat uncoupling protein 1 from Ochotona dauurica (Daurian pika).